The sequence spans 397 residues: ATP-dependent RNA helicase eIF4A (397 aa).

Residues 24-52 (DSFDDMNLKSELLRGIYAYGFERPSAIQQ) carry the Q motif motif. One can recognise a Helicase ATP-binding domain in the interval 55–225 (IMPVIKGHDV…TKFMRDPVRI (171 aa)). An ATP-binding site is contributed by 68–75 (AQSGTGKT). The short motif at 173-176 (DEAD) is the DEAD box element. The region spanning 236 to 397 (GIKQFYIAVE…EMPMNVADLI (162 aa)) is the Helicase C-terminal domain.

The protein belongs to the DEAD box helicase family. eIF4A subfamily. As to quaternary structure, component of the eIF4F complex, which composition varies with external and internal environmental conditions. It is composed of at least eIF4A, eIF4E and eIF4G.

The protein resides in the cytoplasm. It carries out the reaction ATP + H2O = ADP + phosphate + H(+). Functionally, ATP-dependent RNA helicase which is a subunit of the eIF4F complex involved in cap recognition and is required for mRNA binding to ribosome. In the current model of translation initiation, eIF4A unwinds RNA secondary structures in the 5'-UTR of mRNAs which is necessary to allow efficient binding of the small ribosomal subunit, and subsequent scanning for the initiator codon. This Chaetomium globosum (strain ATCC 6205 / CBS 148.51 / DSM 1962 / NBRC 6347 / NRRL 1970) (Soil fungus) protein is ATP-dependent RNA helicase eIF4A (TIF1).